Reading from the N-terminus, the 415-residue chain is ORC1-type DNA replication protein 2 (415 aa).

Residues 69–73 (TGKSV), Tyr215, and Arg227 contribute to the ATP site.

The protein belongs to the CDC6/cdc18 family.

Functionally, involved in regulation of DNA replication. This is ORC1-type DNA replication protein 2 (cdc6-2) from Sulfolobus acidocaldarius (strain ATCC 33909 / DSM 639 / JCM 8929 / NBRC 15157 / NCIMB 11770).